The chain runs to 363 residues: Phospho-N-acetylmuramoyl-pentapeptide-transferase (363 aa).

11 helical membrane passes run 4–24 (NLLV…NVIV), 28–48 (IAIL…IKYF), 72–92 (TPTM…LMLA), 96–116 (NIYV…GLID), 129–149 (INAT…CMIV), 169–189 (LTID…IGSS), 200–220 (GLVT…CYLA), 241–261 (ELTV…WYNI), 266–286 (IFMG…ISVI), 294–314 (GIIG…IYSI), and 342–362 (IVSR…SSLI).

The protein belongs to the glycosyltransferase 4 family. MraY subfamily. Mg(2+) serves as cofactor.

The protein resides in the cell inner membrane. The enzyme catalyses UDP-N-acetyl-alpha-D-muramoyl-L-alanyl-gamma-D-glutamyl-meso-2,6-diaminopimeloyl-D-alanyl-D-alanine + di-trans,octa-cis-undecaprenyl phosphate = di-trans,octa-cis-undecaprenyl diphospho-N-acetyl-alpha-D-muramoyl-L-alanyl-D-glutamyl-meso-2,6-diaminopimeloyl-D-alanyl-D-alanine + UMP. The protein operates within cell wall biogenesis; peptidoglycan biosynthesis. In terms of biological role, catalyzes the initial step of the lipid cycle reactions in the biosynthesis of the cell wall peptidoglycan: transfers peptidoglycan precursor phospho-MurNAc-pentapeptide from UDP-MurNAc-pentapeptide onto the lipid carrier undecaprenyl phosphate, yielding undecaprenyl-pyrophosphoryl-MurNAc-pentapeptide, known as lipid I. This Orientia tsutsugamushi (strain Ikeda) (Rickettsia tsutsugamushi) protein is Phospho-N-acetylmuramoyl-pentapeptide-transferase.